The primary structure comprises 222 residues: WAP four-disulfide core domain protein 1 (222 aa).

A signal peptide spans 1-32; that stretch reads MDSRMLSDQRFCRRIFAAALCVLVLLADSGCA. Residues 61 to 110 form the WAP domain; it reads HYQKNDRCPPPPQTLPDRACEVPSCRSDSECERHKRCCYNGCIYACLESV. Intrachain disulfides connect Cys68-Cys98, Cys80-Cys102, Cys85-Cys97, and Cys91-Cys106.

The protein resides in the secreted. Has growth inhibitory activity. This is WAP four-disulfide core domain protein 1 (WFDC1) from Gallus gallus (Chicken).